The following is a 110-amino-acid chain: Insulin (110 aa).

Residues 1–24 (MAPWTRLLPLLALLSLWIPAPTRA) form the signal peptide. Intrachain disulfides connect Cys31-Cys96, Cys43-Cys109, and Cys95-Cys100. A propeptide spans 57–87 (EAEDLQGKDAELGEAPGAGGLQPSALEAPLQ) (c peptide). Positions 60–80 (DLQGKDAELGEAPGAGGLQPS) are disordered.

This sequence belongs to the insulin family. As to quaternary structure, heterodimer of a B chain and an A chain linked by two disulfide bonds.

The protein localises to the secreted. Insulin decreases blood glucose concentration. It increases cell permeability to monosaccharides, amino acids and fatty acids. It accelerates glycolysis, the pentose phosphate cycle, and glycogen synthesis in liver. The polypeptide is Insulin (INS) (Felis catus (Cat)).